The sequence spans 551 residues: L-lactate permease (551 aa).

12 helical membrane-spanning segments follow: residues 13–33, 37–57, 70–90, 131–151, 159–179, 194–214, 244–264, 366–386, 405–425, 438–458, 494–514, and 530–550; these read NIWL…FALI, LKGY…ALLF, VYGF…AVFV, GAAG…GLGF, LCLI…PILV, MVGR…MAIM, FIGP…CLTL, FDWF…SIVW, LALP…SNYS, TGHA…FLTG, VTGK…VGLV, and IFTC…TWMI.

The protein belongs to the lactate permease family.

The protein localises to the cell inner membrane. It carries out the reaction (S)-lactate(in) + H(+)(in) = (S)-lactate(out) + H(+)(out). The enzyme catalyses (R)-lactate(in) + H(+)(in) = (R)-lactate(out) + H(+)(out). The catalysed reaction is glycolate(in) + H(+)(in) = glycolate(out) + H(+)(out). Uptake of L-lactate across the membrane. Can also transport D-lactate and glycolate. Seems to be driven by a proton motive force. The chain is L-lactate permease (lldP) from Escherichia coli O6:H1 (strain CFT073 / ATCC 700928 / UPEC).